The sequence spans 1032 residues: tRNA wybutosine-synthesizing protein 4 (1032 aa).

Residues Arg69, Gly95, Asp122, 169 to 170 (DL), and Glu196 each bind S-adenosyl-L-methionine. Positions 702–726 (ESVEPNKSQSEKATSKPSAQSQNEP) are disordered. Positions 716-725 (SKPSAQSQNE) are enriched in polar residues. Positions 833 to 988 (PTKLPANLAV…AAGRDVYGNR (156 aa)) constitute a JmjC domain.

This sequence belongs to the methyltransferase superfamily. LCMT family.

It catalyses the reaction 7-[(3S)-3-amino-3-carboxypropyl]wyosine(37) in tRNA(Phe) + S-adenosyl-L-methionine = 7-[(3S)-(3-amino-3-methoxycarbonyl)propyl]wyosine(37) in tRNA(Phe) + S-adenosyl-L-homocysteine. The catalysed reaction is 7-[(3S)-(3-amino-3-methoxycarbonyl)propyl]wyosine(37) in tRNA(Phe) + S-adenosyl-L-methionine + CO2 = wybutosine(37) in tRNA(Phe) + S-adenosyl-L-homocysteine + 2 H(+). It functions in the pathway tRNA modification; wybutosine-tRNA(Phe) biosynthesis. Probable S-adenosyl-L-methionine-dependent methyltransferase that acts as a component of the wybutosine biosynthesis pathway. Wybutosine is a hyper modified guanosine with a tricyclic base found at the 3'-position adjacent to the anticodon of eukaryotic phenylalanine tRNA. May methylate the carboxyl group of leucine residues to form alpha-leucine ester residues. The sequence is that of tRNA wybutosine-synthesizing protein 4 (ppm2) from Aspergillus oryzae (strain ATCC 42149 / RIB 40) (Yellow koji mold).